The sequence spans 2344 residues: Peroxide stress-activated histidine kinase mak3 (2344 aa).

One can recognise a Protein kinase domain in the interval 1–295; that stretch reads MYSQHELRNK…GIVNDLEACL (295 aa). Residues Ser12, Ser16, and Ser17 each carry the phosphoserine modification. Over residues 486 to 503 the composition is skewed to polar residues; that stretch reads SGNTRKTSLLGSNHSSYS. The interval 486 to 506 is disordered; sequence SGNTRKTSLLGSNHSSYSDKL. 2 TPR repeats span residues 829 to 862 and 1340 to 1373; these read CHYLHLAAEEALKIGANQEALDLYNRCIKMIPHE and AFAFETVGSIFVSMELYTSATQYLEEAIRNYAAL. The 52-residue stretch at 1730–1781 folds into the PAC domain; that stretch reads FELEIRIKRKDGVYRWNLTRCTPTTNEKNRTSFLCATIDIDDQKKARATALE. One can recognise a Histidine kinase domain in the interval 1792–2018; sequence NISHELRTPF…TFKICYDLKI (227 aa). A Phosphohistidine; by autocatalysis modification is found at His1795. A Response regulatory domain is found at 2211–2333; that stretch reads KILIAEDNPI…TLIKMLLQYL (123 aa). Residue Asp2263 is modified to 4-aspartylphosphate.

It is found in the cytoplasm. It carries out the reaction ATP + protein L-histidine = ADP + protein N-phospho-L-histidine.. Functionally, involved in the control of the SAPK-dependent transcriptional response to peroxide stress. Regulates sty1 activity. This chain is Peroxide stress-activated histidine kinase mak3 (mak3), found in Schizosaccharomyces pombe (strain 972 / ATCC 24843) (Fission yeast).